Consider the following 311-residue polypeptide: Acetyl-coenzyme A carboxylase carboxyl transferase subunit alpha (311 aa).

The CoA carboxyltransferase C-terminal domain maps to 36 to 286 (NLEKETQKVY…SDYVLKAIEE (251 aa)).

It belongs to the AccA family. In terms of assembly, acetyl-CoA carboxylase is a heterohexamer composed of biotin carboxyl carrier protein (AccB), biotin carboxylase (AccC) and two subunits each of ACCase subunit alpha (AccA) and ACCase subunit beta (AccD).

The protein localises to the cytoplasm. It catalyses the reaction N(6)-carboxybiotinyl-L-lysyl-[protein] + acetyl-CoA = N(6)-biotinyl-L-lysyl-[protein] + malonyl-CoA. It participates in lipid metabolism; malonyl-CoA biosynthesis; malonyl-CoA from acetyl-CoA: step 1/1. In terms of biological role, component of the acetyl coenzyme A carboxylase (ACC) complex. First, biotin carboxylase catalyzes the carboxylation of biotin on its carrier protein (BCCP) and then the CO(2) group is transferred by the carboxyltransferase to acetyl-CoA to form malonyl-CoA. In Campylobacter lari (strain RM2100 / D67 / ATCC BAA-1060), this protein is Acetyl-coenzyme A carboxylase carboxyl transferase subunit alpha.